The following is a 93-amino-acid chain: Protein NONRESPONDING TO OXYLIPINS 2, mitochondrial (93 aa).

Residues 1-27 (MASRCRSLSKPAFSAFRSAMNKPSIRP) constitute a mitochondrion transit peptide.

Expressed in cotyledons, roots and flowers.

It is found in the mitochondrion. Its function is as follows. Essential for mitochondrial morphology, functionality and distribution. Contributes to 9-lipoxygenase (9-LOX)-derived oxylipin synthesis, but not to brassinosteroids (BRs) signaling. Required for waving-inducing oxylipin 9-hydroxyoctadecatrienoic acid and derivatives (e.g. 9-HOT, 2-HOE, 13-HOT, 13-HOD, 13-KOD, 12,13-KHOD, 9-HOT, 9-HOD, 9-KOT, 9-KOD and 9,10-KHOE)-mediated root development regulation, including callose deposition, root waving and lateral roots formation. Involved in basal plant defense toward pathogenic bacteria (e.g. Pseudomonas syringae pv tomato), both in compatible (e.g. Pst DC3000) and incompatible (e.g. Pst DC3000 avrRPM1) interactions, as well as against obligate biotrophic pathogenic fungi (e.g. Golovinomyces cichoracearum), probably via the promotion of callose deposition in the cell wall. Confers sensitivity to the herbicide isoxaben, a herbicide inhibiting cellulose synthesis and altering the cell wall. The polypeptide is Protein NONRESPONDING TO OXYLIPINS 2, mitochondrial (Arabidopsis thaliana (Mouse-ear cress)).